Consider the following 565-residue polypeptide: Deformed epidermal autoregulatory factor 1 homolog (565 aa).

Disordered stretches follow at residues 34-62 and 162-190; these read GGEA…ETPR and GLKG…KGGT. Positions 169–181 are enriched in pro residues; it reads PLTPGPQSPPTPL. The residue at position 171 (threonine 171) is a Phosphothreonine. Serine 176 carries the post-translational modification Phosphoserine. Phosphothreonine is present on threonine 179. Residues 193-273 form the SAND domain; the sequence is NWDPSVYDSE…QCLIQDGILN (81 aa). The Nuclear localization signal motif lies at 301-316; it reads KRRKKENELPTTPVKK. Residues 403-478 are interaction with LMO4; the sequence is IAPFPEAALP…QLKTLFEQAK (76 aa). Position 432 is a phosphothreonine (threonine 432). Serine 448 carries the phosphoserine modification. The Zn(2+) site is built by cysteine 504, cysteine 507, cysteine 515, cysteine 518, cysteine 524, cysteine 528, histidine 536, and cysteine 540. The segment at 504 to 540 adopts an MYND-type zinc-finger fold; it reads CVNCGREAMNECTGCHKVNYCSTFCQRKDWKDHQHIC.

In terms of assembly, homodimer. Interacts with LMO4; LMO4 blocks export from nucleus. Interacts with LMO2 and CLIM2. May interact with the corepressors NCOR1 and NCRO2. Identified in a complex with XRCC5 and XRCC6. Interacts (via the SAND domain) with the DNA-PK complex subunit XRCC6; the interaction is direct and may be inhibited by DNA-binding. In terms of processing, may be phosphorylated by DNA-PK complex in a DNA independent manner (in vitro).

It is found in the nucleus. Transcription factor that binds to sequence with multiple copies of 5'-TTC[CG]G-3' present in its own promoter and that of the HNRPA2B1 gene. Down-regulates transcription of these genes. Binds to the retinoic acid response element (RARE) 5'-AGGGTTCACCGAAAGTTCA-3'. Activates the proenkephalin gene independently of promoter binding, probably through protein-protein interaction. Regulates epithelial cell proliferation and side-branching in the mammary gland. Required for neural tube closure and skeletal patterning. Controls the expression of peripheral tissue antigens in pancreatic lymph nodes. Transcriptional activator of EIF4G3. May also involved in behavior. The chain is Deformed epidermal autoregulatory factor 1 homolog (DEAF1) from Pan troglodytes (Chimpanzee).